The following is a 602-amino-acid chain: Alpha-glucosides permease MPH3 (602 aa).

Residues Met1–Thr106 lie on the Cytoplasmic side of the membrane. Residues Thr107–Phe127 form a helical membrane-spanning segment. Residues Gln128 to Glu142 are Extracellular-facing. The chain crosses the membrane as a helical span at residues Ile143 to Leu163. Residues Gln164–Thr178 are Cytoplasmic-facing. Residues Leu179 to Leu199 traverse the membrane as a helical segment. Position 200 (Gly200) is a topological domain, extracellular. A helical transmembrane segment spans residues Met201–Val221. At Ser222–Tyr234 the chain is on the cytoplasmic side. Residues Tyr235–Met255 form a helical membrane-spanning segment. The Extracellular segment spans residues Lys256–Lys270. Residues Leu271–Pro291 traverse the membrane as a helical segment. At Glu292 to Arg363 the chain is on the cytoplasmic side. Residues Ile364 to Thr384 traverse the membrane as a helical segment. The Extracellular segment spans residues Tyr385–Ser397. The helical transmembrane segment at Phe398–Ala418 threads the bilayer. Residues Ser419–Asp426 are Cytoplasmic-facing. Residues Leu427–Cys447 traverse the membrane as a helical segment. The Extracellular portion of the chain corresponds to Ser448 to Ser459. The helical transmembrane segment at Leu460–Val480 threads the bilayer. Over Ser481–Thr492 the chain is Cytoplasmic. Residues Ile493 to Tyr513 form a helical membrane-spanning segment. Residues Gln514–Lys525 are Extracellular-facing. A helical transmembrane segment spans residues Ser526–Pro546. At Glu547–Glu602 the chain is on the cytoplasmic side. The segment covering Pro582–Ile595 has biased composition (basic and acidic residues). Residues Pro582–Glu602 form a disordered region.

The protein belongs to the major facilitator superfamily. Sugar transporter (TC 2.A.1.1) family.

The protein localises to the cell membrane. Its function is as follows. High-affinity uptake of maltose and maltotriose. Also transports alpha-methylglucoside, glucose and turanose but not melezitose or trehalose. In Saccharomyces cerevisiae (strain ATCC 204508 / S288c) (Baker's yeast), this protein is Alpha-glucosides permease MPH3 (MPH3).